Here is a 109-residue protein sequence, read N- to C-terminus: Red pigment-concentrating prohormone (109 aa).

A signal peptide spans 1-25 (MVRRSGVTLLVVALLVVTLMSSVSA). Residue Gln-26 is modified to Pyrrolidone carboxylic acid. Trp-33 bears the Tryptophan amide mark. Residues 34 to 78 (GKRAAGASGSNGGVGEAVSGLHPSVGGAPGGVVPPGSSSPGDSCG) are disordered. Low complexity-rich tracts occupy residues 49 to 59 (EAVSGLHPSVG) and 67 to 78 (PPGSSSPGDSCG).

It belongs to the AKH/HRTH/RPCH family.

The protein localises to the secreted. In terms of biological role, this hormone adapts the animal to light backgrounds by stimulating concentration of the pigment of its red body-chromatophores. The sequence is that of Red pigment-concentrating prohormone from Callinectes sapidus (Blue crab).